A 212-amino-acid polypeptide reads, in one-letter code: MRGRFLVLEGIDGCGKTTQLKALADWLPASGLMPSGAQLITTREPGGTALGQALRQLLLHPPEEQAPATRAELLLYAADRAQHVQTRLEPALAAGDWVLSDRYCGSTAAYQGYGRGLDLDLITQLEQLATAGLQPDLCLWLELSPELAAQRRSGQQQDRIEAEGLAFLARVHQGFAELSQRPLWRRVDASLPPEQVHQQVQHLVREGLELAL.

10-17 contacts ATP; sequence GIDGCGKT.

This sequence belongs to the thymidylate kinase family.

It carries out the reaction dTMP + ATP = dTDP + ADP. Functionally, phosphorylation of dTMP to form dTDP in both de novo and salvage pathways of dTTP synthesis. In Synechococcus sp. (strain RCC307), this protein is Thymidylate kinase.